The sequence spans 904 residues: Nitrate reductase [NADH] 2 (904 aa).

Composition is skewed to polar residues over residues 1–10 and 35–50; these read MAASVENRQF and PSPN…NSTI. Positions 1 to 65 are disordered; it reads MAASVENRQF…SSEDDDDDDE (65 aa). Residues 56 to 65 show a composition bias toward acidic residues; sequence SSEDDDDDDE. Cys183 serves as a coordination point for Mo-molybdopterin. A Cytochrome b5 heme-binding domain is found at 531 to 606; it reads SKMYSMSEVR…LEDFRIGELI (76 aa). Residues His566 and His589 each contribute to the heme site. The FAD-binding FR-type domain occupies 647–759; the sequence is REKIPCKLID…KGPLGHIEYQ (113 aa). Residues 699–702, 716–720, Phe721, Phe728, 733–735, and Thr786 each bind FAD; these read RAYT, VVKIY, and QMS.

It belongs to the nitrate reductase family. Homodimer. FAD serves as cofactor. Heme is required as a cofactor. Requires Mo-molybdopterin as cofactor.

The catalysed reaction is nitrite + NAD(+) + H2O = nitrate + NADH + H(+). Regulated by the nitrogen source and controlled by the circadian rhythm. Functionally, nitrate reductase is a key enzyme involved in the first step of nitrate assimilation in plants, fungi and bacteria. This chain is Nitrate reductase [NADH] 2 (NIA2), found in Nicotiana tabacum (Common tobacco).